Consider the following 234-residue polypeptide: Meiotically up-regulated gene 35 protein (234 aa).

The segment covering 126–156 has biased composition (basic and acidic residues); that stretch reads DSSGDLTSTDKERDVSPVSHSEKPYWDRYDL. Positions 126 to 176 are disordered; the sequence is DSSGDLTSTDKERDVSPVSHSEKPYWDRYDLDQPSNQDVEESRNLVQEPKH. A phosphoserine mark is found at Ser-127 and Ser-128. Position 132 is a phosphothreonine (Thr-132). A Phosphoserine modification is found at Ser-141.

It is found in the cytoplasm. In terms of biological role, has a role in meiosis. This chain is Meiotically up-regulated gene 35 protein (mug35), found in Schizosaccharomyces pombe (strain 972 / ATCC 24843) (Fission yeast).